Consider the following 396-residue polypeptide: Phosphoglycerate kinase (396 aa).

Substrate contacts are provided by residues 21–23 (DFN), R36, 59–62 (HLGR), R118, and R151. ATP contacts are provided by residues K201, G292, E323, and 349–352 (GGDS).

Belongs to the phosphoglycerate kinase family. In terms of assembly, monomer.

The protein localises to the cytoplasm. The catalysed reaction is (2R)-3-phosphoglycerate + ATP = (2R)-3-phospho-glyceroyl phosphate + ADP. Its pathway is carbohydrate degradation; glycolysis; pyruvate from D-glyceraldehyde 3-phosphate: step 2/5. The chain is Phosphoglycerate kinase from Leptospira interrogans serogroup Icterohaemorrhagiae serovar copenhageni (strain Fiocruz L1-130).